We begin with the raw amino-acid sequence, 475 residues long: 1-aminocyclopropane-1-carboxylate synthase CMA101 (475 aa).

Position 272 is an N6-(pyridoxal phosphate)lysine (Lys-272).

This sequence belongs to the class-I pyridoxal-phosphate-dependent aminotransferase family. In terms of assembly, homodimer. Pyridoxal 5'-phosphate serves as cofactor.

It catalyses the reaction S-adenosyl-L-methionine = 1-aminocyclopropane-1-carboxylate + S-methyl-5'-thioadenosine + H(+). It participates in alkene biosynthesis; ethylene biosynthesis via S-adenosyl-L-methionine; ethylene from S-adenosyl-L-methionine: step 1/2. Functionally, catalyzes the formation of 1-aminocyclopropane-1-carboxylate, a direct precursor of ethylene in higher plants. This Cucurbita maxima (Pumpkin) protein is 1-aminocyclopropane-1-carboxylate synthase CMA101 (ACS2).